Here is a 1044-residue protein sequence, read N- to C-terminus: Phosphatidylinositol 4,5-bisphosphate 3-kinase catalytic subunit delta isoform (1044 aa).

Positions 16 to 105 constitute a PI3K-ABD domain; that stretch reads ENQSVVVDFL…LPVLRLVARE (90 aa). A PI3K-RBD domain is found at 187–278; sequence NRALLVNVKF…GLTPHLTMVH (92 aa). The tract at residues 287–312 is disordered; the sequence is DEQSNPAPQVQKPRAKPPPIPAKKPS. The C2 PI3K-type domain occupies 319–476; sequence LEQPFRIELI…SAAALLICLP (158 aa). The region spanning 497-674 is the PIK helical domain; it reads HSECVHVTEE…GLILEAYCRG (178 aa). The residue at position 524 (Tyr-524) is a Phosphotyrosine. The 283-residue stretch at 745-1027 folds into the PI3K/PI4K catalytic domain; it reads CVEQCTFMDS…KFNEALRESW (283 aa). A G-loop region spans residues 751 to 757; it reads FMDSKMK. The catalytic loop stretch occupies residues 890–898; that stretch reads GIGDRHSDN. The activation loop stretch occupies residues 909-935; sequence HIDFGHFLGNFKTKFGINRERVPFILT. Ser-1039 is modified (phosphoserine; by autocatalysis).

It belongs to the PI3/PI4-kinase family. As to quaternary structure, heterodimer of a catalytic subunit PIK3CD and a p85 regulatory subunit (PIK3R1, PIK3R2 or PIK3R3). Interacts with ERAS. Interacts with HRAS. In terms of processing, autophosphorylation on Ser-1039 results in the almost complete inactivation of the lipid kinase activity. As to expression, in humans, the highest levels of expression are seen in peripheral blood mononuclear cells, spleen, and thymus, and low levels of expression in testes, uterus, colon, and small intestine but not in other tissues examined including prostate, heart, brain, and liver. Isoform 2 is expressed in normal thymus, lung and spleen tissues, and is detected at low levels in normal lysates from colon and ovarian biopsies, at elevated levels in lysates from colorectal tumors and is abundantly expressed in some ovarian tumors (at protein level). Both isoform 1 and isoform 2 are widely expressed. Isoform 1 is expressed predominantly in leukocytes.

The protein resides in the cytoplasm. The catalysed reaction is a 1,2-diacyl-sn-glycero-3-phospho-(1D-myo-inositol-4,5-bisphosphate) + ATP = a 1,2-diacyl-sn-glycero-3-phospho-(1D-myo-inositol-3,4,5-trisphosphate) + ADP + H(+). It carries out the reaction a 1,2-diacyl-sn-glycero-3-phospho-(1D-myo-inositol) + ATP = a 1,2-diacyl-sn-glycero-3-phospho-(1D-myo-inositol-3-phosphate) + ADP + H(+). The enzyme catalyses 1-octadecanoyl-2-(5Z,8Z,11Z,14Z)-eicosatetraenoyl-sn-glycero-3-phospho-1D-myo-inositol 4,5-bisphosphate + ATP = 1-octadecanoyl-2-(5Z,8Z,11Z,14Z-eicosatetraenoyl)-sn-glycero-3-phospho-(1D-myo-inositol 3,4,5-triphosphate) + ADP + H(+). It functions in the pathway phospholipid metabolism; phosphatidylinositol phosphate biosynthesis. Activated by growth factors and cytokine receptors through a tyrosine-kinase-dependent mechanism. Activated by RAS. IC87114 inhibits lipid kinase activity and is selective in cells at doses up to 5-10 uM. IC87114 blocks T-cell receptor signaling in naive and memory T-cells and reduces cytokine production by memory T-cells. Phosphoinositide-3-kinase (PI3K) phosphorylates phosphatidylinositol (PI) and its phosphorylated derivatives at position 3 of the inositol ring to produce 3-phosphoinositides. Uses ATP and PtdIns(4,5)P2 (phosphatidylinositol 4,5-bisphosphate) to generate phosphatidylinositol 3,4,5-trisphosphate (PIP3). PIP3 plays a key role by recruiting PH domain-containing proteins to the membrane, including AKT1 and PDPK1, activating signaling cascades involved in cell growth, survival, proliferation, motility and morphology. Mediates immune responses. Plays a role in B-cell development, proliferation, migration, and function. Required for B-cell receptor (BCR) signaling. Mediates B-cell proliferation response to anti-IgM, anti-CD40 and IL4 stimulation. Promotes cytokine production in response to TLR4 and TLR9. Required for antibody class switch mediated by TLR9. Involved in the antigen presentation function of B-cells. Involved in B-cell chemotaxis in response to CXCL13 and sphingosine 1-phosphate (S1P). Required for proliferation, signaling and cytokine production of naive, effector and memory T-cells. Required for T-cell receptor (TCR) signaling. Mediates TCR signaling events at the immune synapse. Activation by TCR leads to antigen-dependent memory T-cell migration and retention to antigenic tissues. Together with PIK3CG participates in T-cell development. Contributes to T-helper cell expansion and differentiation. Required for T-cell migration mediated by homing receptors SELL/CD62L, CCR7 and S1PR1 and antigen dependent recruitment of T-cells. Together with PIK3CG is involved in natural killer (NK) cell development and migration towards the sites of inflammation. Participates in NK cell receptor activation. Plays a role in NK cell maturation and cytokine production. Together with PIK3CG is involved in neutrophil chemotaxis and extravasation. Together with PIK3CG participates in neutrophil respiratory burst. Plays important roles in mast-cell development and mast cell mediated allergic response. Involved in stem cell factor (SCF)-mediated proliferation, adhesion and migration. Required for allergen-IgE-induced degranulation and cytokine release. The lipid kinase activity is required for its biological function. Isoform 2 may be involved in stabilizing total RAS levels, resulting in increased ERK phosphorylation and increased PI3K activity. The polypeptide is Phosphatidylinositol 4,5-bisphosphate 3-kinase catalytic subunit delta isoform (PIK3CD) (Homo sapiens (Human)).